Reading from the N-terminus, the 554-residue chain is Arginine--tRNA ligase (554 aa).

A 'HIGH' region motif is present at residues 132-142; the sequence is ANPTGPIHLGG.

Belongs to the class-I aminoacyl-tRNA synthetase family. As to quaternary structure, monomer.

Its subcellular location is the cytoplasm. The enzyme catalyses tRNA(Arg) + L-arginine + ATP = L-arginyl-tRNA(Arg) + AMP + diphosphate. The chain is Arginine--tRNA ligase from Clavibacter sepedonicus (Clavibacter michiganensis subsp. sepedonicus).